Reading from the N-terminus, the 212-residue chain is Pyridoxine/pyridoxamine 5'-phosphate oxidase (212 aa).

Substrate-binding positions include 8-11 (RREY) and K66. FMN-binding positions include 61 to 66 (RIVLLK), 76 to 77 (FT), R82, K83, and Q105. The substrate site is built by Y123, R127, and S131. Residues 140–141 (QS) and W185 each bind FMN. 191-193 (RLH) lines the substrate pocket. Residue R195 coordinates FMN.

It belongs to the pyridoxamine 5'-phosphate oxidase family. As to quaternary structure, homodimer. FMN is required as a cofactor.

It carries out the reaction pyridoxamine 5'-phosphate + O2 + H2O = pyridoxal 5'-phosphate + H2O2 + NH4(+). The catalysed reaction is pyridoxine 5'-phosphate + O2 = pyridoxal 5'-phosphate + H2O2. It functions in the pathway cofactor metabolism; pyridoxal 5'-phosphate salvage; pyridoxal 5'-phosphate from pyridoxamine 5'-phosphate: step 1/1. It participates in cofactor metabolism; pyridoxal 5'-phosphate salvage; pyridoxal 5'-phosphate from pyridoxine 5'-phosphate: step 1/1. In terms of biological role, catalyzes the oxidation of either pyridoxine 5'-phosphate (PNP) or pyridoxamine 5'-phosphate (PMP) into pyridoxal 5'-phosphate (PLP). This is Pyridoxine/pyridoxamine 5'-phosphate oxidase from Shewanella amazonensis (strain ATCC BAA-1098 / SB2B).